The primary structure comprises 396 residues: tRNA (guanine-N(7)-)-methyltransferase (396 aa).

The S-adenosyl-L-methionine site is built by E125, E150, and D177. Substrate is bound by residues K203 and D233.

The protein belongs to the class I-like SAM-binding methyltransferase superfamily. TrmB family.

The catalysed reaction is guanosine(46) in tRNA + S-adenosyl-L-methionine = N(7)-methylguanosine(46) in tRNA + S-adenosyl-L-homocysteine. The protein operates within tRNA modification; N(7)-methylguanine-tRNA biosynthesis. Its function is as follows. Catalyzes the formation of N(7)-methylguanine at position 46 (m7G46) in tRNA. This Helicobacter hepaticus (strain ATCC 51449 / 3B1) protein is tRNA (guanine-N(7)-)-methyltransferase.